The following is a 334-amino-acid chain: L-lactate dehydrogenase C chain (334 aa).

Residues 30 to 58 (GQVG…VEDK) and arginine 100 contribute to the NAD(+) site. Positions 107, 139, and 170 each coordinate substrate. Position 139 (asparagine 139) interacts with NAD(+). Histidine 194 serves as the catalytic Proton acceptor. Position 249 (threonine 249) interacts with substrate.

This sequence belongs to the LDH/MDH superfamily. LDH family. As to quaternary structure, homotetramer. Eye and liver.

It is found in the cytoplasm. The catalysed reaction is (S)-lactate + NAD(+) = pyruvate + NADH + H(+). It functions in the pathway fermentation; pyruvate fermentation to lactate; (S)-lactate from pyruvate: step 1/1. The protein is L-lactate dehydrogenase C chain (ldhc) of Fundulus heteroclitus (Killifish).